The sequence spans 332 residues: ADP-L-glycero-D-manno-heptose-6-epimerase (332 aa).

NADP(+)-binding positions include 10–11 (MI), 31–32 (DK), lysine 38, lysine 53, 75–79 (MGACS), and asparagine 92. Catalysis depends on tyrosine 145, which acts as the Proton acceptor. Lysine 149 serves as a coordination point for NADP(+). Residue asparagine 173 coordinates substrate. NADP(+) contacts are provided by valine 174 and lysine 182. Lysine 182 functions as the Proton acceptor in the catalytic mechanism. Substrate is bound by residues arginine 184, histidine 191, 205-208 (FKSY), arginine 219, and tyrosine 290.

The protein belongs to the NAD(P)-dependent epimerase/dehydratase family. HldD subfamily. Homopentamer. Requires NADP(+) as cofactor.

It catalyses the reaction ADP-D-glycero-beta-D-manno-heptose = ADP-L-glycero-beta-D-manno-heptose. It functions in the pathway nucleotide-sugar biosynthesis; ADP-L-glycero-beta-D-manno-heptose biosynthesis; ADP-L-glycero-beta-D-manno-heptose from D-glycero-beta-D-manno-heptose 7-phosphate: step 4/4. Its function is as follows. Catalyzes the interconversion between ADP-D-glycero-beta-D-manno-heptose and ADP-L-glycero-beta-D-manno-heptose via an epimerization at carbon 6 of the heptose. The polypeptide is ADP-L-glycero-D-manno-heptose-6-epimerase (Fusobacterium nucleatum subsp. nucleatum (strain ATCC 25586 / DSM 15643 / BCRC 10681 / CIP 101130 / JCM 8532 / KCTC 2640 / LMG 13131 / VPI 4355)).